Reading from the N-terminus, the 74-residue chain is Serine protease inhibitor Kazal-type 7 (74 aa).

Residues 1 to 17 (MKLLGGLLLLFTATCLC) form the signal peptide. A Kazal-like domain is found at 18–74 (NVDCDIYKKYPVVAIPCPIENIPVCGSDYITYGNKCKLCTEILRSNGKIQFLHEGHC). 3 cysteine pairs are disulfide-bonded: Cys21/Cys56, Cys34/Cys53, and Cys42/Cys74.

It localises to the secreted. Functionally, probable serine protease inhibitor. In Rattus norvegicus (Rat), this protein is Serine protease inhibitor Kazal-type 7 (Spink7).